We begin with the raw amino-acid sequence, 313 residues long: HTH-type transcriptional regulator CbbR (313 aa).

The 61-residue stretch at 1–61 (MRNVTFRQLR…DRTRGGMVPT (61 aa)) folds into the HTH lysR-type domain. A DNA-binding region (H-T-H motif) is located at residues 21–40 (INLAAEALGLTGPALTLQIQ).

It belongs to the LysR transcriptional regulatory family.

Functionally, transcriptional activator for the cbb operon for RuBisCO and other Calvin cycle genes. In Rhizobium meliloti (strain 1021) (Ensifer meliloti), this protein is HTH-type transcriptional regulator CbbR (cbbR).